The sequence spans 396 residues: Acetyl-CoA acetyltransferase ERG10, cytosolic (396 aa).

The Acyl-thioester intermediate role is filled by Cys-91. Tyr-186 contacts K(+). CoA-binding residues include Asn-227 and Lys-230. K(+) contacts are provided by Ala-246, Pro-247, and Val-347. Active-site proton acceptor residues include His-351 and Cys-381. Residue Asn-382 coordinates chloride.

This sequence belongs to the thiolase-like superfamily. Thiolase family. As to quaternary structure, homotetramer. The cofactor is K(+).

The protein localises to the cytoplasm. The protein resides in the cytosol. It carries out the reaction 2 acetyl-CoA = acetoacetyl-CoA + CoA. Its pathway is metabolic intermediate biosynthesis; (R)-mevalonate biosynthesis; (R)-mevalonate from acetyl-CoA: step 1/3. Acetyl-CoA acetyltransferase; part of the first module of ergosterol biosynthesis pathway that includes the early steps of the pathway, conserved across all eukaryotes, and which results in the formation of mevalonate from acetyl-coenzyme A (acetyl-CoA). ERG10B catalyzes the formation of acetoacetyl-CoA from acetyl-CoA. The first module starts with the action of the cytosolic acetyl-CoA acetyltransferase ERG10B that catalyzes the formation of acetoacetyl-CoA. The hydroxymethylglutaryl-CoA synthases ERG13 then condenses acetyl-CoA with acetoacetyl-CoA to form HMG-CoA. The rate-limiting step of the early module is the reduction to mevalonate by the 3-hydroxy-3-methylglutaryl-coenzyme A (HMG-CoA) reductases HMG1. In Gibberella zeae (strain ATCC MYA-4620 / CBS 123657 / FGSC 9075 / NRRL 31084 / PH-1) (Wheat head blight fungus), this protein is Acetyl-CoA acetyltransferase ERG10, cytosolic.